The following is a 131-amino-acid chain: Profilin-2 (131 aa).

C13 and C115 are joined by a disulfide. An Involved in PIP2 interaction motif is present at residues 81–97; that stretch reads AVIRGKKGAGGITIKKT. T111 is modified (phosphothreonine).

This sequence belongs to the profilin family. Occurs in many kinds of cells as a complex with monomeric actin in a 1:1 ratio. Post-translationally, phosphorylated by MAP kinases.

It localises to the cytoplasm. The protein localises to the cytoskeleton. Functionally, binds to actin and affects the structure of the cytoskeleton. At high concentrations, profilin prevents the polymerization of actin, whereas it enhances it at low concentrations. By binding to PIP2, it inhibits the formation of IP3 and DG. This Phleum pratense (Common timothy) protein is Profilin-2 (PRO2).